The chain runs to 661 residues: UvrABC system protein C (661 aa).

The region spanning His52–Val130 is the GIY-YIG domain. The UVR domain occupies Gln240–Ile275.

Belongs to the UvrC family. Interacts with UvrB in an incision complex.

The protein localises to the cytoplasm. Functionally, the UvrABC repair system catalyzes the recognition and processing of DNA lesions. UvrC both incises the 5' and 3' sides of the lesion. The N-terminal half is responsible for the 3' incision and the C-terminal half is responsible for the 5' incision. This Bartonella henselae (strain ATCC 49882 / DSM 28221 / CCUG 30454 / Houston 1) (Rochalimaea henselae) protein is UvrABC system protein C.